A 391-amino-acid chain; its full sequence is ATP-sensitive inward rectifier potassium channel 1 (391 aa).

At 1–77 (MGASERSVFR…IWTTVLDLKW (77 aa)) the chain is on the cytoplasmic side. Position 44 is a phosphoserine; by SGK1 (S44). The helical transmembrane segment at 78–102 (RYKMTVFITAFLGSWFLFGLLWYVV) threads the bilayer. Topologically, residues 103–127 (AYVHKDLPEFYPPDNRTPCVENING) are extracellular. N117 carries an N-linked (GlcNAc...) asparagine glycan. An intramembrane region (helical; Pore-forming) is located at residues 128–139 (MTSAFLFSLETQ). The pore-forming intramembrane region spans 140–146 (VTIGYGF). Residues 141-146 (TIGYGF) carry the Selectivity filter motif. The Extracellular portion of the chain corresponds to 147-155 (RFVTEQCAT). Residues 156 to 177 (AIFLLIFQSILGVIINSFMCGA) traverse the membrane as a helical segment. The Cytoplasmic portion of the chain corresponds to 178–391 (ILAKISRPKK…EVDETDDTQM (214 aa)). The interval 180-207 (AKISRPKKRAKTITFSKNAVISKRGGKL) is polyphosphoinositide (PIP2)-binding. 223–230 (GSHIYGKL) contributes to the ATP binding site.

The protein belongs to the inward rectifier-type potassium channel (TC 1.A.2.1) family. KCNJ1 subfamily. As to quaternary structure, interacts with SGK1 and SLC9A3R2/NHERF2. In terms of processing, phosphorylation at Ser-44 by SGK1 is necessary for its expression at the cell membrane. In terms of tissue distribution, mainly in kidney (renal cortex, medulla and papilla). As to expression, kidney.

Its subcellular location is the cell membrane. It catalyses the reaction K(+)(in) = K(+)(out). Inhibited by WNK3. Activated by phosphatidylinositol 4,5 biphosphate (PtdIns(4,5)P2). Functionally, inward rectifier potassium channels are characterized by a greater tendency to allow potassium to flow into the cell rather than out of it. Their voltage dependence is regulated by the concentration of extracellular potassium; as external potassium is raised, the voltage range of the channel opening shifts to more positive voltages. The inward rectification is mainly due to the blockage of outward current by internal magnesium. This channel is activated by internal ATP and can be blocked by external barium. In the kidney, probably plays a major role in potassium homeostasis. In terms of biological role, inward rectifier potassium channels are characterized by a greater tendency to allow potassium to flow into the cell rather than out of it. Their voltage dependence is regulated by the concentration of extracellular potassium; as external potassium is raised, the voltage range of the channel opening shifts to more positive voltages. In Rattus norvegicus (Rat), this protein is ATP-sensitive inward rectifier potassium channel 1 (Kcnj1).